Reading from the N-terminus, the 230-residue chain is V-type proton ATPase subunit E (230 aa).

The protein belongs to the V-ATPase E subunit family. In terms of assembly, V-ATPase is a heteromultimeric enzyme composed of a peripheral catalytic V1 complex (components A to H) attached to an integral membrane V0 proton pore complex (components: a, c, c', c'', d, e, f and VOA1).

It is found in the vacuole membrane. In terms of biological role, subunit of the V1 complex of vacuolar(H+)-ATPase (V-ATPase), a multisubunit enzyme composed of a peripheral complex (V1) that hydrolyzes ATP and a membrane integral complex (V0) that translocates protons. V-ATPase is responsible for acidifying and maintaining the pH of intracellular compartments. The polypeptide is V-type proton ATPase subunit E (Neurospora crassa (strain ATCC 24698 / 74-OR23-1A / CBS 708.71 / DSM 1257 / FGSC 987)).